Here is a 116-residue protein sequence, read N- to C-terminus: Tachykinin-3 (116 aa).

Positions 1–20 (MRSAMLFAAVLALSLAWTFG) are cleaved as a signal peptide. The propeptide occupies 21–79 (AACEEPQEQGGRLSKDSDLSLLPPPLLRRLYDSRSISLEGLLKVLSKASVGPKETSLPQ). Met91 is subject to Methionine amide. Positions 92–116 (GKRNSQPDTPADVVEENTPSFGVLK) are disordered. Residues 95-116 (NSQPDTPADVVEENTPSFGVLK) constitute a propeptide that is removed on maturation.

This sequence belongs to the tachykinin family.

Its subcellular location is the secreted. Functionally, tachykinins are active peptides which excite neurons, evoke behavioral responses, are potent vasodilators and secretagogues, and contract (directly or indirectly) many smooth muscles. Is a critical central regulator of gonadal function. This Rattus norvegicus (Rat) protein is Tachykinin-3 (Tac3).